The following is a 325-amino-acid chain: Release factor glutamine methyltransferase (325 aa).

Residues Gly141–Gly145, Asp164, Trp193, and Asn207 each bind S-adenosyl-L-methionine. Asn207–Tyr210 is a binding site for substrate. The interval Leu306–Ala325 is disordered.

It belongs to the protein N5-glutamine methyltransferase family. PrmC subfamily.

The catalysed reaction is L-glutaminyl-[peptide chain release factor] + S-adenosyl-L-methionine = N(5)-methyl-L-glutaminyl-[peptide chain release factor] + S-adenosyl-L-homocysteine + H(+). Functionally, methylates the class 1 translation termination release factors RF1/PrfA and RF2/PrfB on the glutamine residue of the universally conserved GGQ motif. In Rhodospirillum rubrum (strain ATCC 11170 / ATH 1.1.1 / DSM 467 / LMG 4362 / NCIMB 8255 / S1), this protein is Release factor glutamine methyltransferase.